The sequence spans 123 residues: WAP four-disulfide core domain protein 2 (123 aa).

The N-terminal stretch at methionine 1–glycine 28 is a signal peptide. 2 WAP domains span residues glycine 30–cysteine 71 and proline 74–asparagine 122. Intrachain disulfides connect cysteine 37/cysteine 63, cysteine 46/cysteine 67, cysteine 50/cysteine 62, cysteine 56/cysteine 71, cysteine 81/cysteine 109, cysteine 92/cysteine 113, cysteine 96/cysteine 108, and cysteine 102/cysteine 118. N-linked (GlcNAc...) asparagine glycosylation occurs at asparagine 45.

Homotrimer; disulfide-linked. As to expression, epididymis.

It localises to the secreted. Its function is as follows. Broad range protease inhibitor. This chain is WAP four-disulfide core domain protein 2 (WFDC2), found in Oryctolagus cuniculus (Rabbit).